The following is a 507-amino-acid chain: ATP synthase subunit alpha, chloroplastic (507 aa).

An ATP-binding site is contributed by 170–177; sequence GDRQTGKT.

The protein belongs to the ATPase alpha/beta chains family. F-type ATPases have 2 components, CF(1) - the catalytic core - and CF(0) - the membrane proton channel. CF(1) has five subunits: alpha(3), beta(3), gamma(1), delta(1), epsilon(1). CF(0) has four main subunits: a, b, b' and c.

Its subcellular location is the plastid. It localises to the chloroplast thylakoid membrane. The enzyme catalyses ATP + H2O + 4 H(+)(in) = ADP + phosphate + 5 H(+)(out). In terms of biological role, produces ATP from ADP in the presence of a proton gradient across the membrane. The alpha chain is a regulatory subunit. The sequence is that of ATP synthase subunit alpha, chloroplastic from Oryza nivara (Indian wild rice).